The primary structure comprises 293 residues: Indole-3-glycerol phosphate synthase (293 aa).

It belongs to the TrpC family.

It catalyses the reaction 1-(2-carboxyphenylamino)-1-deoxy-D-ribulose 5-phosphate + H(+) = (1S,2R)-1-C-(indol-3-yl)glycerol 3-phosphate + CO2 + H2O. The protein operates within amino-acid biosynthesis; L-tryptophan biosynthesis; L-tryptophan from chorismate: step 4/5. The protein is Indole-3-glycerol phosphate synthase of Rippkaea orientalis (strain PCC 8801 / RF-1) (Cyanothece sp. (strain PCC 8801)).